Here is a 66-residue protein sequence, read N- to C-terminus: Large ribosomal subunit protein bL33c (66 aa).

It belongs to the bacterial ribosomal protein bL33 family.

It is found in the plastid. The protein resides in the chloroplast. This chain is Large ribosomal subunit protein bL33c, found in Jasminum nudiflorum (Winter jasmine).